Here is a 201-residue protein sequence, read N- to C-terminus: uncharacterized protein (201 aa).

Functionally, may have a role in tissue tropism within the insect larvae. This is an uncharacterized protein from Lepidoptera (butterflies and moths).